The following is a 258-amino-acid chain: MNPPPSLLDKAAIVTGGSRGIGAAIAIELARRGAHVLITYNTASHKAQLVAEEIQKLGRKATVVQASSTDREGPNRIVQAAVSQYGRIDIIVNNAGMADDCLLQDLTHEFWDRIMDVNLRLPAFLVQAALQHLGPAPRIVNISSLAARAGYNATSVYAASKAALEGMTRAWATELGHRYNVTVNCVNPGPVDTDIMAVDENTDAEVVAYWNAKVKETPAAPRVGTPGDIAQIVAFLCEEGSRWCTGSVVNANGGLVTV.

NADP(+) contacts are provided by isoleucine 21, asparagine 41, and asparagine 94. Residues serine 143 and serine 144 each act as proton donor in the active site. Positions 157, 161, 191, and 193 each coordinate NADP(+). The active-site Proton acceptor is tyrosine 157. Lysine 161 acts as the Lowers pKa of active site Tyr in catalysis.

It belongs to the short-chain dehydrogenases/reductases (SDR) family.

The catalysed reaction is (1S,3S,6S,7S,8R)-7-hydroxy-6-[(4-methoxyphenyl)methyl]-3-(methylamino)-5-azatricyclo[6.3.1.0(1,5)]dodecan-9-one + NADPH + H(+) = (1S,3S,6S,7S,8S,9S)-6-[(4-methoxyphenyl)methyl]-3-(methylamino)-5-azatricyclo[6.3.1.0(1,5)]dodecane-7,9-diol + NADP(+). Its pathway is secondary metabolite biosynthesis. Functionally, short-chain dehydrogenase/reductase; part of the gene cluster that mediates the biosynthesis of the alkaloid (-)-FR901483, a potent immunosuppressant that shows efficacy in animal models and a probable inhibitor of purine nucleotide biosynthesis by targeting phosphoribosylpyrophosphate amidotransferase (PPAT). Within the pathway, FrzI catalyzes the formation of dephospho-(-)-FR901483 from the aza-tricyclic intermediate produced by FrzH. The biosynthesis of (-)-FR901483 starts with the condensation of two L-tyrosines to yield (S,S)-dityrosyl-piperazine. This process occurs in 3 steps with the non-canonical nonribosomal peptide synthetase FrzA catalyzing the reduction of L-tyrosine into L-tyrosinal, the spontaneous condensation of 2 L-tyrosinal units, and the subsequent reduction by the NmrA-like family domain-containing oxidoreductase FrzB. The cytochrome P450 monooxygenase FrzC then performs coupling between N10 and C1' to morph the piperazine into a 1,4-diazabicyclo[3.2.1]octane spiro-fused to a 2,5-cyclohexadienone. The dienone portion is further reduced to cyclohexanone by the flavin-dependent reductase FrzD. The methyltranserases (MTs) FrzE and FrzF are then involved in the methylation at the C10' amine and the C4 phenolic oxygen, respectively. The order of the two MTs appear to be interchangeable. Cleavage of the C9-N10' bond by the dioxygenase FrzG then leads to formation of a conjugated iminium. In addition to the oxidation of C9, an additional dehydrogenation between C7 and C8 can occur to give a likely shunt product. The next biosynthetic step is the intramolecular aldol condensation catalyzed by the newly identified aldolase FrzH to yield an aza-tricyclic product with the formation of a C9-C3' bond. The short-chain dehydrogenase/reductase FrzI then produces dephospho-(-)-FR901483 that is phosphorylated at C4'-OH into (-)-FR901483 by the phosphotransferase FrzJ. This chain is Short-chain dehydrogenase/reductase FrzI, found in Cladobotryum sp.